A 612-amino-acid chain; its full sequence is Sulfite reductase [NADPH] hemoprotein beta-component (612 aa).

Residues 1 to 26 are disordered; the sequence is MDDHKPIETPDGPAVDTPGIGARRYE. Positions 469, 475, 514, and 518 each coordinate [4Fe-4S] cluster. Position 518 (cysteine 518) interacts with siroheme.

The protein belongs to the nitrite and sulfite reductase 4Fe-4S domain family. In terms of assembly, alpha(8)-beta(8). The alpha component is a flavoprotein, the beta component is a hemoprotein. The cofactor is siroheme. [4Fe-4S] cluster is required as a cofactor.

The enzyme catalyses hydrogen sulfide + 3 NADP(+) + 3 H2O = sulfite + 3 NADPH + 4 H(+). It functions in the pathway sulfur metabolism; hydrogen sulfide biosynthesis; hydrogen sulfide from sulfite (NADPH route): step 1/1. In terms of biological role, component of the sulfite reductase complex that catalyzes the 6-electron reduction of sulfite to sulfide. This is one of several activities required for the biosynthesis of L-cysteine from sulfate. The chain is Sulfite reductase [NADPH] hemoprotein beta-component from Methylorubrum extorquens (strain ATCC 14718 / DSM 1338 / JCM 2805 / NCIMB 9133 / AM1) (Methylobacterium extorquens).